Here is a 160-residue protein sequence, read N- to C-terminus: NAD(P)H-quinone oxidoreductase subunit I, chloroplastic (160 aa).

4Fe-4S ferredoxin-type domains lie at 55–84 (GRIH…VDWK) and 95–124 (LNYS…MTEE). C64, C67, C70, C74, C104, C107, C110, and C114 together coordinate [4Fe-4S] cluster.

This sequence belongs to the complex I 23 kDa subunit family. NDH is composed of at least 16 different subunits, 5 of which are encoded in the nucleus. Requires [4Fe-4S] cluster as cofactor.

It is found in the plastid. It localises to the chloroplast thylakoid membrane. The catalysed reaction is a plastoquinone + NADH + (n+1) H(+)(in) = a plastoquinol + NAD(+) + n H(+)(out). The enzyme catalyses a plastoquinone + NADPH + (n+1) H(+)(in) = a plastoquinol + NADP(+) + n H(+)(out). Functionally, NDH shuttles electrons from NAD(P)H:plastoquinone, via FMN and iron-sulfur (Fe-S) centers, to quinones in the photosynthetic chain and possibly in a chloroplast respiratory chain. The immediate electron acceptor for the enzyme in this species is believed to be plastoquinone. Couples the redox reaction to proton translocation, and thus conserves the redox energy in a proton gradient. In Cucumis sativus (Cucumber), this protein is NAD(P)H-quinone oxidoreductase subunit I, chloroplastic.